The following is a 418-amino-acid chain: Serine/threonine transporter SstT (418 aa).

9 helical membrane passes run 16–36 (SLVSQILIGMIVGILLATLIP), 45–65 (LGTLFVGALKAVAPVLVLLLV), 83–103 (LLILYLFGTFCAAVVAVVASF), 142–162 (ALLEGNYIGILAWAIALGLSL), 192–212 (PLGIMGLVASTFAETGFSALL), 218–238 (LIVLIGCMLFVAFVVNPLIVF), 289–309 (VSIPLGATINMAGAAITITVL), 317–337 (LGISVDLATAVLLSVVATISA), and 364–384 (VAMQVVAVGFIIGVLQDSAET).

The protein belongs to the dicarboxylate/amino acid:cation symporter (DAACS) (TC 2.A.23) family.

The protein resides in the cell inner membrane. The catalysed reaction is L-serine(in) + Na(+)(in) = L-serine(out) + Na(+)(out). It catalyses the reaction L-threonine(in) + Na(+)(in) = L-threonine(out) + Na(+)(out). In terms of biological role, involved in the import of serine and threonine into the cell, with the concomitant import of sodium (symport system). This chain is Serine/threonine transporter SstT, found in Tolumonas auensis (strain DSM 9187 / NBRC 110442 / TA 4).